A 609-amino-acid polypeptide reads, in one-letter code: UvrABC system protein C (609 aa).

A GIY-YIG domain is found at 15–92 (TGSGVYQIQD…IKQFRPRYNV (78 aa)). Residues 202 to 237 (DQVIIKLTERMEVASENLVFEEAAHYRDQIRQLRRL) form the UVR domain.

This sequence belongs to the UvrC family. As to quaternary structure, interacts with UvrB in an incision complex.

It is found in the cytoplasm. Functionally, the UvrABC repair system catalyzes the recognition and processing of DNA lesions. UvrC both incises the 5' and 3' sides of the lesion. The N-terminal half is responsible for the 3' incision and the C-terminal half is responsible for the 5' incision. The polypeptide is UvrABC system protein C (Coxiella burnetii (strain Dugway 5J108-111)).